The primary structure comprises 258 residues: Protein U52 (258 aa).

The protein belongs to the herpesviridae UL79 family.

This Human herpesvirus 6B (strain Z29) (HHV-6 variant B) protein is Protein U52 (U52).